Reading from the N-terminus, the 139-residue chain is AP-4 complex subunit sigma (139 aa).

It belongs to the adaptor complexes small subunit family. May be part of the adaptor protein complex 4 (AP-4), a heterotetramer composed of two large adaptins (epsilon-type subunitand beta-type subunit), a medium adaptin (mu-type subunit) and a small adaptin (sigma-type).

The protein localises to the golgi apparatus. The protein resides in the trans-Golgi network membrane. Its function is as follows. Probable component of an adaptor protein complex. Adaptor protein complexes are vesicle coat components involved both in vesicle formation and cargo selection. They control the vesicular transport of proteins in different trafficking pathways. In Dictyostelium discoideum (Social amoeba), this protein is AP-4 complex subunit sigma.